Consider the following 246-residue polypeptide: PARP-type zinc finger-containing protein C2A9.07c (246 aa).

Residues 8–99 form a PARP-type; degenerate zinc finger; the sequence is YRVELAKTGR…EKILRAFEQG (92 aa). The segment covering 103–126 has biased composition (basic and acidic residues); it reads EEDEERCRKMASDASEEKDRKIEE. Positions 103-246 are disordered; that stretch reads EEDEERCRKM…ESGNEYSDSD (144 aa). Position 130 is a phosphothreonine (T130). S131 carries the phosphoserine modification. Residues 157 to 168 are compositionally biased toward basic residues; the sequence is NKKHKAERKRSP. A compositionally biased stretch (acidic residues) spans 175–184; it reads LEDDEEIEDV. A compositionally biased stretch (basic and acidic residues) spans 185–196; the sequence is ASDKDEEEKPWS. Residues 197 to 215 show a composition bias toward acidic residues; sequence GDEEDDDELVVKDSEDETE. S243 and S245 each carry phosphoserine.

Its subcellular location is the nucleus. It is found in the mitochondrion. The protein is PARP-type zinc finger-containing protein C2A9.07c of Schizosaccharomyces pombe (strain 972 / ATCC 24843) (Fission yeast).